A 556-amino-acid chain; its full sequence is Carotenoid-cleaving dioxygenase, mitochondrial (556 aa).

Residues His-203, His-263, His-334, and His-550 each contribute to the Fe cation site.

Belongs to the carotenoid oxygenase family. Fe(2+) is required as a cofactor.

It is found in the mitochondrion. The catalysed reaction is all-trans-beta-carotene + O2 = beta-ionone + all-trans-10'-apo-beta-carotenal. The enzyme catalyses 5-cis-lycopene + O2 = 5-cis-10'-apo-lycopenal + (3E,5E)-6,10-dimethylundeca-3,5,9-trien-2-one. It catalyses the reaction 13-cis-lycopene + O2 = 13-cis-10'-apo-lycopenal + (3E,5E)-6,10-dimethylundeca-3,5,9-trien-2-one. It carries out the reaction lutein + O2 = (3R,6R)-hydroxy-alpha-ionone + (3R)-3-hydroxy-10'-apo-beta-carotenal. The catalysed reaction is lutein + O2 = (3R,6R)-3-hydroxy-10'-apo-alpha-carotenal + (3R)-hydroxy-beta-ionone. The enzyme catalyses all-trans-zeaxanthin + 2 O2 = 4,9-dimethyldodeca-2,4,6,8,10-pentaenedial + 2 (3R)-hydroxy-beta-ionone. It catalyses the reaction all-trans-zeaxanthin + O2 = (3R)-3-hydroxy-10'-apo-beta-carotenal + (3R)-hydroxy-beta-ionone. It carries out the reaction beta-cryptoxanthin + O2 = all-trans-10'-apo-beta-carotenal + (3R)-hydroxy-beta-ionone. The catalysed reaction is all-trans-10'-apo-beta-carotenal + O2 = beta-ionone + 4,9-dimethyldodeca-2,4,6,8,10-pentaenedial. The enzyme catalyses (3R)-3-hydroxy-10'-apo-beta-carotenal + O2 = 4,9-dimethyldodeca-2,4,6,8,10-pentaenedial + (3R)-hydroxy-beta-ionone. It catalyses the reaction (3R,6R)-3-hydroxy-10'-apo-alpha-carotenal + O2 = (3R,6R)-hydroxy-alpha-ionone + 4,9-dimethyldodeca-2,4,6,8,10-pentaenedial. Broad specificity mitochondrial dioxygenase that mediates the asymmetric oxidative cleavage of carotenoids. Cleaves carotenes (pure hydrocarbon carotenoids) such as all-trans-beta-carotene and lycopene as well as xanthophylls (oxygenated carotenoids) such as zeaxanthin, lutein and beta-cryptoxanthin at both the 9,10 and the 9',10' carbon-carbon double bond. Through its function in carotenoids metabolism regulates oxidative stress and the production of important signaling molecules. In Macaca fascicularis (Crab-eating macaque), this protein is Carotenoid-cleaving dioxygenase, mitochondrial.